The primary structure comprises 94 residues: Co-chaperonin GroES (94 aa).

This sequence belongs to the GroES chaperonin family. In terms of assembly, heptamer of 7 subunits arranged in a ring. Interacts with the chaperonin GroEL.

Its subcellular location is the cytoplasm. Functionally, together with the chaperonin GroEL, plays an essential role in assisting protein folding. The GroEL-GroES system forms a nano-cage that allows encapsulation of the non-native substrate proteins and provides a physical environment optimized to promote and accelerate protein folding. GroES binds to the apical surface of the GroEL ring, thereby capping the opening of the GroEL channel. This chain is Co-chaperonin GroES, found in Streptococcus pneumoniae serotype 19F (strain G54).